We begin with the raw amino-acid sequence, 83 residues long: Small ribosomal subunit protein uS17 (83 aa).

The protein belongs to the universal ribosomal protein uS17 family. As to quaternary structure, part of the 30S ribosomal subunit.

Functionally, one of the primary rRNA binding proteins, it binds specifically to the 5'-end of 16S ribosomal RNA. The sequence is that of Small ribosomal subunit protein uS17 from Campylobacter hominis (strain ATCC BAA-381 / DSM 21671 / CCUG 45161 / LMG 19568 / NCTC 13146 / CH001A).